The primary structure comprises 129 residues: M-zodatoxin-Lt8l (129 aa).

The signal sequence occupies residues 1–20 (MKYFVVXXALVAAFACIAES). A propeptide spanning residues 21-60 (KPAESEHELAEVEEENELADLEDAVWLEDLADLSDLEETR) is cleaved from the precursor.

The protein belongs to the cationic peptide 06 (cytoinsectotoxin) family. Expressed by the venom gland.

Its subcellular location is the secreted. Functionally, insecticidal, cytolytic and antimicrobial peptide. Forms voltage-dependent, ion-permeable channels in membranes. At high concentration causes cell membrane lysis. The polypeptide is M-zodatoxin-Lt8l (cit 1-12) (Lachesana tarabaevi (Spider)).